The chain runs to 433 residues: ATP-dependent protease ATPase subunit HslU (433 aa).

ATP is bound by residues Val-18, 60–65 (GVGKTE), Asp-246, Glu-311, and Arg-383.

The protein belongs to the ClpX chaperone family. HslU subfamily. A double ring-shaped homohexamer of HslV is capped on each side by a ring-shaped HslU homohexamer. The assembly of the HslU/HslV complex is dependent on binding of ATP.

It localises to the cytoplasm. In terms of biological role, ATPase subunit of a proteasome-like degradation complex; this subunit has chaperone activity. The binding of ATP and its subsequent hydrolysis by HslU are essential for unfolding of protein substrates subsequently hydrolyzed by HslV. HslU recognizes the N-terminal part of its protein substrates and unfolds these before they are guided to HslV for hydrolysis. In Rhodopseudomonas palustris (strain TIE-1), this protein is ATP-dependent protease ATPase subunit HslU.